We begin with the raw amino-acid sequence, 827 residues long: Probable beta-glucosidase H (827 aa).

Aspartate 223 is a catalytic residue. The region spanning arginine 387–valine 546 is the PA14 domain. N-linked (GlcNAc...) asparagine glycans are attached at residues asparagine 471, asparagine 594, asparagine 600, and asparagine 625.

This sequence belongs to the glycosyl hydrolase 3 family.

The protein resides in the secreted. The catalysed reaction is Hydrolysis of terminal, non-reducing beta-D-glucosyl residues with release of beta-D-glucose.. It participates in glycan metabolism; cellulose degradation. Its function is as follows. Beta-glucosidases are one of a number of cellulolytic enzymes involved in the degradation of cellulosic biomass. Catalyzes the last step releasing glucose from the inhibitory cellobiose. The chain is Probable beta-glucosidase H (bglH) from Aspergillus flavus (strain ATCC 200026 / FGSC A1120 / IAM 13836 / NRRL 3357 / JCM 12722 / SRRC 167).